The following is a 298-amino-acid chain: Estradiol 17-beta-dehydrogenase 11 (298 aa).

The first 21 residues, 1-21 (MKYLLDLILLLPLLIVFCIES), serve as a signal peptide directing secretion. 40–64 (LITGAGHGIGRLTAYEFAKLNTKLV) serves as a coordination point for NADP(+). Substrate is bound at residue Ser-172. The active-site Proton acceptor is the Tyr-185.

Belongs to the short-chain dehydrogenases/reductases (SDR) family. 17-beta-HSD 3 subfamily.

The protein localises to the endoplasmic reticulum. The protein resides in the lipid droplet. The catalysed reaction is 17beta-estradiol + NAD(+) = estrone + NADH + H(+). The enzyme catalyses 17beta-estradiol + NADP(+) = estrone + NADPH + H(+). Its function is as follows. Can convert androstan-3-alpha,17-beta-diol (3-alpha-diol) to androsterone in vitro, suggesting that it may participate in androgen metabolism during steroidogenesis. May act by metabolizing compounds that stimulate steroid synthesis and/or by generating metabolites that inhibit it. Has no activity toward DHEA (dehydroepiandrosterone), or A-dione (4-androste-3,17-dione), and only a slight activity toward testosterone to A-dione. The chain is Estradiol 17-beta-dehydrogenase 11 (Hsd17b11) from Rattus norvegicus (Rat).